The sequence spans 547 residues: RING finger protein ETP1 homolog (547 aa).

The RING-type zinc finger occupies 208–248 (CVVCLERMDSSITGLITIVCQHTFHCPCLQKWGNSSCPVCR). The UBP-type; degenerate zinc-finger motif lies at 245–338 (PVCRYTQKVQ…GKLVELSTDG (94 aa)). Zn(2+) contacts are provided by Cys-262, Cys-265, Cys-274, Cys-277, Cys-282, His-289, His-293, and His-299. Positions 514-523 (LPNNSTVRSN) are enriched in polar residues. Residues 514–547 (LPNNSTVRSNSVKSKKKKKKKPVVPSSSGSLGTD) are disordered. A compositionally biased stretch (basic residues) spans 526–535 (KSKKKKKKKP).

It localises to the cytoplasm. May act as a cytoplasmic retention protein with a role in regulating nuclear transport. In Schizosaccharomyces pombe (strain 972 / ATCC 24843) (Fission yeast), this protein is RING finger protein ETP1 homolog.